The sequence spans 257 residues: uncharacterized protein (257 aa).

The chain crosses the membrane as a helical span at residues 6–26; sequence IFWLNLAAIIIISIVVSGGMF.

The protein belongs to the staphylococcal tandem lipoprotein family.

It is found in the cell membrane. This is an uncharacterized protein from Staphylococcus aureus (strain Mu50 / ATCC 700699).